A 159-amino-acid chain; its full sequence is SsrA-binding protein (159 aa).

The segment at 137–159 (KRQTEKERDWEREKQRLFQRDQR) is disordered.

Belongs to the SmpB family.

The protein localises to the cytoplasm. Its function is as follows. Required for rescue of stalled ribosomes mediated by trans-translation. Binds to transfer-messenger RNA (tmRNA), required for stable association of tmRNA with ribosomes. tmRNA and SmpB together mimic tRNA shape, replacing the anticodon stem-loop with SmpB. tmRNA is encoded by the ssrA gene; the 2 termini fold to resemble tRNA(Ala) and it encodes a 'tag peptide', a short internal open reading frame. During trans-translation Ala-aminoacylated tmRNA acts like a tRNA, entering the A-site of stalled ribosomes, displacing the stalled mRNA. The ribosome then switches to translate the ORF on the tmRNA; the nascent peptide is terminated with the 'tag peptide' encoded by the tmRNA and targeted for degradation. The ribosome is freed to recommence translation, which seems to be the essential function of trans-translation. This is SsrA-binding protein from Cellvibrio japonicus (strain Ueda107) (Pseudomonas fluorescens subsp. cellulosa).